The primary structure comprises 1042 residues: Isoleucine--tRNA ligase (1042 aa).

A 'HIGH' region motif is present at residues 48–58; that stretch reads PFATGLPHFGH. Residues 594–598 carry the 'KMSKS' region motif; sequence KMSKS. Lys597 contributes to the ATP binding site.

It belongs to the class-I aminoacyl-tRNA synthetase family. IleS type 2 subfamily. As to quaternary structure, monomer. Zn(2+) serves as cofactor.

The protein resides in the cytoplasm. The catalysed reaction is tRNA(Ile) + L-isoleucine + ATP = L-isoleucyl-tRNA(Ile) + AMP + diphosphate. In terms of biological role, catalyzes the attachment of isoleucine to tRNA(Ile). As IleRS can inadvertently accommodate and process structurally similar amino acids such as valine, to avoid such errors it has two additional distinct tRNA(Ile)-dependent editing activities. One activity is designated as 'pretransfer' editing and involves the hydrolysis of activated Val-AMP. The other activity is designated 'posttransfer' editing and involves deacylation of mischarged Val-tRNA(Ile). This chain is Isoleucine--tRNA ligase, found in Borreliella burgdorferi (strain ZS7) (Borrelia burgdorferi).